The primary structure comprises 193 residues: CASP-like protein 2U1 (193 aa).

Residues 1-18 are Cytoplasmic-facing; the sequence is MAMALALGGGQDAERKVK. A helical transmembrane segment spans residues 19–39; it reads VAEVALRALLCGLGALAAALV. The Extracellular segment spans residues 40–61; it reads ATDTQTRTFFSLQKKASYTDMK. The chain crosses the membrane as a helical span at residues 62-82; it reads AMVFLVDAAAVAAGYSLLQLA. Topologically, residues 83–113 are cytoplasmic; sequence ARCCGGGAMSSGRGDGGGRGRALSWCVFSCD. The chain crosses the membrane as a helical span at residues 114-134; that stretch reads QALAYVLLAAVAAALQASVVA. The Extracellular portion of the chain corresponds to 135-156; sequence KRGQPELQWMGICALYGAFCRQ. A helical membrane pass occupies residues 157–177; sequence AGAGLATAVVAGLAAVLLAFL. Topologically, residues 178–193 are cytoplasmic; it reads SAFNLFRLYGSGGTKS.

The protein belongs to the Casparian strip membrane proteins (CASP) family. In terms of assembly, homodimer and heterodimers.

The protein resides in the cell membrane. In Sorghum bicolor (Sorghum), this protein is CASP-like protein 2U1.